We begin with the raw amino-acid sequence, 484 residues long: Glutamyl-tRNA(Gln) amidotransferase subunit A (484 aa).

Active-site charge relay system residues include K76 and S151. The active-site Acyl-ester intermediate is S175.

This sequence belongs to the amidase family. GatA subfamily. In terms of assembly, heterotrimer of A, B and C subunits.

The enzyme catalyses L-glutamyl-tRNA(Gln) + L-glutamine + ATP + H2O = L-glutaminyl-tRNA(Gln) + L-glutamate + ADP + phosphate + H(+). In terms of biological role, allows the formation of correctly charged Gln-tRNA(Gln) through the transamidation of misacylated Glu-tRNA(Gln) in organisms which lack glutaminyl-tRNA synthetase. The reaction takes place in the presence of glutamine and ATP through an activated gamma-phospho-Glu-tRNA(Gln). The protein is Glutamyl-tRNA(Gln) amidotransferase subunit A of Hahella chejuensis (strain KCTC 2396).